Consider the following 181-residue polypeptide: Protein Syd (181 aa).

The protein belongs to the Syd family.

It is found in the cell inner membrane. Functionally, interacts with the SecY protein in vivo. May bind preferentially to an uncomplexed state of SecY, thus functioning either as a chelating agent for excess SecY in the cell or as a regulatory factor that negatively controls the translocase function. This is Protein Syd from Cronobacter sakazakii (strain ATCC BAA-894) (Enterobacter sakazakii).